A 397-amino-acid chain; its full sequence is Lysophospholipid transporter LplT (397 aa).

The Periplasmic portion of the chain corresponds to Met-1–Lys-17. A helical membrane pass occupies residues Ala-18–Leu-38. The Cytoplasmic segment spans residues Ala-39–Pro-52. A helical transmembrane segment spans residues Ile-53–Ala-73. Residues Asp-74–Leu-90 lie on the Periplasmic side of the membrane. The chain crosses the membrane as a helical span at residues Leu-91–Val-111. Topologically, residues Gly-112–Thr-144 are cytoplasmic. The chain crosses the membrane as a helical span at residues Ile-145–Val-165. A topological domain (periplasmic) is located at residue Ala-166. The helical transmembrane segment at Leu-167–Leu-187 threads the bilayer. Residues Ala-188 to Ser-226 are Cytoplasmic-facing. The helical transmembrane segment at Leu-227–Leu-247 threads the bilayer. The Periplasmic portion of the chain corresponds to Gly-248 to Thr-256. A helical transmembrane segment spans residues Tyr-257–Val-277. The Cytoplasmic portion of the chain corresponds to Thr-278–Glu-280. The helical transmembrane segment at Thr-281 to Leu-301 threads the bilayer. The Periplasmic segment spans residues Gln-302–Glu-304. A helical membrane pass occupies residues Leu-305 to Pro-325. The Cytoplasmic portion of the chain corresponds to Leu-326–Ala-343. A helical membrane pass occupies residues Ile-344–Leu-364. At Ala-365–Val-366 the chain is on the periplasmic side. A helical transmembrane segment spans residues Met-367 to Ile-387. At Thr-388–His-397 the chain is on the cytoplasmic side.

This sequence belongs to the major facilitator superfamily. LplT (TC 2.A.1.42) family.

Its subcellular location is the cell inner membrane. Catalyzes the facilitated diffusion of 2-acyl-glycero-3-phosphoethanolamine (2-acyl-GPE) into the cell. The polypeptide is Lysophospholipid transporter LplT (Escherichia coli O7:K1 (strain IAI39 / ExPEC)).